The sequence spans 881 residues: Alanine--tRNA ligase (881 aa).

Positions 565, 569, 672, and 676 each coordinate Zn(2+).

Belongs to the class-II aminoacyl-tRNA synthetase family. Zn(2+) is required as a cofactor.

It is found in the cytoplasm. The catalysed reaction is tRNA(Ala) + L-alanine + ATP = L-alanyl-tRNA(Ala) + AMP + diphosphate. Catalyzes the attachment of alanine to tRNA(Ala) in a two-step reaction: alanine is first activated by ATP to form Ala-AMP and then transferred to the acceptor end of tRNA(Ala). Also edits incorrectly charged Ser-tRNA(Ala) and Gly-tRNA(Ala) via its editing domain. The chain is Alanine--tRNA ligase from Novosphingobium aromaticivorans (strain ATCC 700278 / DSM 12444 / CCUG 56034 / CIP 105152 / NBRC 16084 / F199).